Here is a 409-residue protein sequence, read N- to C-terminus: Dipeptidase 1 (409 aa).

The first 16 residues, M1–A16, serve as a signal peptide directing secretion. Zn(2+) contacts are provided by H36 and D38. The N-linked (GlcNAc...) asparagine glycan is linked to N57. A disulfide bond links C87 and C170. E141 serves as a coordination point for Zn(2+). Residue H168 participates in substrate binding. Zn(2+)-binding residues include H214 and H235. Residues C242 and C274 are joined by a disulfide bond. R246 provides a ligand contact to substrate. N279 is a glycosylation site (N-linked (GlcNAc...) asparagine). D304 provides a ligand contact to substrate. S384 carries GPI-anchor amidated serine lipidation. Residues A385–P409 constitute a propeptide, removed in mature form.

Belongs to the metallo-dependent hydrolases superfamily. Peptidase M19 family. In terms of assembly, homodimer; disulfide-linked. Zn(2+) serves as cofactor.

Its subcellular location is the apical cell membrane. It localises to the cell projection. It is found in the microvillus membrane. The protein localises to the cell membrane. The enzyme catalyses an L-aminoacyl-L-amino acid + H2O = 2 an L-alpha-amino acid. It carries out the reaction leukotriene D4 + H2O = leukotriene E4 + glycine. The catalysed reaction is L-cystine-bis-glycine + 2 H2O = L-cystine + 2 glycine. It catalyses the reaction a beta-lactam + H2O = a substituted beta-amino acid. The enzyme catalyses glycyldehydrophenylalanine + H2O = 2,3-didehydrophenylalanine + glycine. Its activity is regulated as follows. Inhibited by L-penicillamine. Inhibited by cilastatin. Hydrolyzes a wide range of dipeptides. Hydrolyzes the conversion of leukotriene D4 to leukotriene E4. Hydrolyzes cystinyl-bis-glycine (cys-bis-gly) formed during glutathione degradation. Also possesses beta lactamase activity and hydrolytically inactivates beta-lactam antibiotics. Its function is as follows. Independently of its dipeptidase activity, acts as an adhesion receptor for neutrophil recruitment from bloodstream into inflamed lungs and liver. The polypeptide is Dipeptidase 1 (DPEP1) (Sus scrofa (Pig)).